The following is a 443-amino-acid chain: Zinc finger protein ZIC 1 (443 aa).

The segment at 221 to 256 adopts a C2H2-type 1; atypical zinc-finger fold; sequence LICKWIEPEQLANPKKSCNKTFSTMHELVTHVTVEH. The segment at 265-292 adopts a C2H2-type 2; atypical zinc-finger fold; it reads HICVWEECPREGKPFKAKYKLINHIRVH. C2H2-type zinc fingers lie at residues 298–322, 328–352, and 358–380; these read FPCPFPGCGKVFARSENLKIHKRTH, FKCEFEGCDRRFANSSDRKKHMHVH, and YLCKMCDKSYTHPSSLRKHMKVH. The tract at residues 371-433 is disordered; it reads SSLRKHMKVH…AVHHTSNHST (63 aa). A compositionally biased stretch (low complexity) spans 383-396; that stretch reads SSQGSQPSPAASSG. Residues 397–413 are compositionally biased toward polar residues; sequence YESSTPPTIVSPSAENQ. The interval 408 to 443 is negatively regulates transcriptional activity; the sequence is PSAENQSTSSLSPSSSAVHHTSNHSTLSSNFNEWYV. Residues 414-433 show a composition bias toward low complexity; sequence STSSLSPSSSAVHHTSNHST.

The protein belongs to the GLI C2H2-type zinc-finger protein family. During early gastrula stages, widely expressed in the dorsal ectoderm. At mid-gastrula, expressed throughout the presumptive neural plate and at late gastrula, expression gradually diminishes in the dorsal midline and increases in the anterior folds. By early neurula stage, expression becomes restricted to the lateral edges of the neural plate, corresponding to the presumptive dorsal neural plate and neural crest, and in flanking ectoderm. In early tailbud stages (stages 22-23), expressed in the dorsal forebrain, midbrain and hindbrain. Subsequently expressed in the telencephalon and at the diencephalon/mesencephalon boundary. In the spinal cord, expression is restricted to the dorsal most region including the roof plate. Also expressed in the somites but not in eye vesicles. At larval stages, expressed mainly in the dorsal neural tube throughout its anteroposterior axis.

It localises to the nucleus. The protein resides in the cytoplasm. Its function is as follows. Transcriptional activator that induces expression of multiple genes including pax3, en2, snai2/slug, feb and a subset of wnt genes. Has multiple key roles in the regulation of neural induction and neurogenesis: acts as a neural competence factor, sensitizing the presumptive neuroectoderm to respond to subsequent neuralizing signals. Promotes both preplacodal cell fates and neural crest cell fates, two of the cell populations that arise from the neural plate border. Cooperates with pax3 in concert with wnt signaling to determine neural crest fate. Synergizes with the bmp-inhibitor noggin/nog and acts through the wnt pathway to induce expression of en2. May bind to the minimal GLI-consensus sequence 5'-TGGGTGGTC-3'. The protein is Zinc finger protein ZIC 1 (zic1) of Xenopus laevis (African clawed frog).